The following is a 252-amino-acid chain: Cilia- and flagella-associated protein 300 (252 aa).

The protein belongs to the CFAP300 family.

The protein resides in the cytoplasm. The protein localises to the cytoskeleton. Its subcellular location is the cilium axoneme. In terms of biological role, cilium- and flagellum-specific protein that plays a role in axonemal structure organization and motility. Plays a role in outer and inner axonemal dynein arm assembly. This is Cilia- and flagella-associated protein 300 from Paramecium tetraurelia.